A 151-amino-acid chain; its full sequence is Endoribonuclease YbeY (151 aa).

His108, His112, and Asp118 together coordinate Zn(2+).

The protein belongs to the endoribonuclease YbeY family. Zn(2+) serves as cofactor.

Its subcellular location is the cytoplasm. In terms of biological role, single strand-specific metallo-endoribonuclease involved in late-stage 70S ribosome quality control and in maturation of the 3' terminus of the 16S rRNA. The sequence is that of Endoribonuclease YbeY from Porphyromonas gingivalis (strain ATCC BAA-308 / W83).